The sequence spans 90 residues: Delta-aiptatoxin-Adi1a (90 aa).

The first 21 residues, 1–21 (MKTAMLIAVLGFCAALCFVES), serve as a signal peptide directing secretion. The propeptide occupies 22 to 44 (SHEEEREAAVYLTDLVSKAESAI). 3 disulfides stabilise this stretch: Cys-50-Cys-86, Cys-52-Cys-77, and Cys-70-Cys-87.

Belongs to the sea anemone sodium channel inhibitory toxin family.

The protein localises to the secreted. The protein resides in the nematocyst. Functionally, cardioactive peptide that acts on voltage-gated sodium channels (hNav1.5/SCN5A) and voltage-gated potassium channels (Kv). The activity on sodium channels consists of inhibition on sodium current inactivation with no significant effect on current activation. This effect may be caused by direct interaction of the toxin with sodium channel site-3. The activity on potassium channels consists of a significant increase of the amplitude of the transient component of the potassium current, shifting the current threshold to more negative membrane potentials. These effects are concentration-dependent and reversible and may be due to a direct interaction between the toxin and the voltage-sensing domain of the channel. Physiologically, this toxin increases the amplitude of cardiomyocyte contraction and slows the late phase of the twitch relaxation velocity with no induction of spontaneous twitching. It increases action potential duration of cardiomyocytes with no effect on its threshold and on the cell resting potential. On insects, it shows neurotoxic activity to the blowfly larvae S.falculaty, causing an immediate spasm that progressed to body contraction and paralysis. The chain is Delta-aiptatoxin-Adi1a from Exaiptasia diaphana (Tropical sea anemone).